A 495-amino-acid chain; its full sequence is NADH-ubiquinone oxidoreductase chain 4 (495 aa).

14 helical membrane-spanning segments follow: residues 9–29 (YSNL…ILVI), 37–57 (IRGI…FFWI), 89–109 (ISLF…LVGF), 118–138 (EYMI…CSLD), 139–159 (LLIF…IIGV), 173–193 (FFLY…FIFF), 214–234 (ILLW…VPVH), 245–265 (PTAG…YGFL), 272–292 (FPEA…IAII), 307–327 (IIAY…FSLN), 335–355 (ILLM…VGAL), 367–387 (YGGL…FTLA), 413–433 (LVAT…LWLY), and 457–477 (VLIF…PEVF).

The protein belongs to the complex I subunit 4 family.

Its subcellular location is the mitochondrion membrane. The enzyme catalyses a ubiquinone + NADH + 5 H(+)(in) = a ubiquinol + NAD(+) + 4 H(+)(out). In terms of biological role, core subunit of the mitochondrial membrane respiratory chain NADH dehydrogenase (Complex I) that is believed to belong to the minimal assembly required for catalysis. Complex I functions in the transfer of electrons from NADH to the respiratory chain. The immediate electron acceptor for the enzyme is believed to be ubiquinone. The polypeptide is NADH-ubiquinone oxidoreductase chain 4 (ND4) (Marchantia polymorpha (Common liverwort)).